Consider the following 133-residue polypeptide: ATP synthase epsilon chain, chloroplastic (133 aa).

Belongs to the ATPase epsilon chain family. F-type ATPases have 2 components, CF(1) - the catalytic core - and CF(0) - the membrane proton channel. CF(1) has five subunits: alpha(3), beta(3), gamma(1), delta(1), epsilon(1). CF(0) has three main subunits: a, b and c.

The protein localises to the plastid. The protein resides in the chloroplast thylakoid membrane. In terms of biological role, produces ATP from ADP in the presence of a proton gradient across the membrane. This is ATP synthase epsilon chain, chloroplastic from Trieres chinensis (Marine centric diatom).